A 361-amino-acid polypeptide reads, in one-letter code: Arginine N(omega)-methyltransferase (361 aa).

Over residues 1–17 (MRHVQEARAVPAEHEAR) the composition is skewed to basic and acidic residues. The tract at residues 1-24 (MRHVQEARAVPAEHEARPAPVTMP) is disordered. In terms of domain architecture, SAM-dependent MTase PRMT-type spans 65–361 (DADAFAQIAR…WSDFTLRVSI (297 aa)).

This sequence belongs to the class I-like SAM-binding methyltransferase superfamily. Protein arginine N-methyltransferase family.

It catalyses the reaction L-arginine + S-adenosyl-L-methionine = N(omega)-methyl-L-arginine + S-adenosyl-L-homocysteine + H(+). The protein operates within antibiotic biosynthesis. Functionally, involved in the biosynthesis of the glucosamine-nitrosourea antibiotic streptozotocin (SZN). Catalyzes the conversion of L-arginine to N(omega)-methyl-L-arginine (L-NMA), using S-adenosyl-L-methionine (SAM) as a methyl donor. The chain is Arginine N(omega)-methyltransferase from Streptomyces achromogenes subsp. streptozoticus.